Reading from the N-terminus, the 427-residue chain is Light-independent protochlorophyllide reductase subunit N (427 aa).

[4Fe-4S] cluster contacts are provided by Cys28, Cys53, and Cys114.

The protein belongs to the BchN/ChlN family. Protochlorophyllide reductase is composed of three subunits; BchL, BchN and BchB. Forms a heterotetramer of two BchB and two BchN subunits. Requires [4Fe-4S] cluster as cofactor.

It carries out the reaction chlorophyllide a + oxidized 2[4Fe-4S]-[ferredoxin] + 2 ADP + 2 phosphate = protochlorophyllide a + reduced 2[4Fe-4S]-[ferredoxin] + 2 ATP + 2 H2O. It functions in the pathway porphyrin-containing compound metabolism; bacteriochlorophyll biosynthesis (light-independent). Component of the dark-operative protochlorophyllide reductase (DPOR) that uses Mg-ATP and reduced ferredoxin to reduce ring D of protochlorophyllide (Pchlide) to form chlorophyllide a (Chlide). This reaction is light-independent. The NB-protein (BchN-BchB) is the catalytic component of the complex. The chain is Light-independent protochlorophyllide reductase subunit N from Jannaschia sp. (strain CCS1).